We begin with the raw amino-acid sequence, 248 residues long: Triosephosphate isomerase (248 aa).

9–11 (NWK) is a binding site for substrate. Residue H94 is the Electrophile of the active site. E166 acts as the Proton acceptor in catalysis. Substrate-binding positions include G172, S212, and 233-234 (GG).

The protein belongs to the triosephosphate isomerase family. Homodimer.

It is found in the cytoplasm. It carries out the reaction D-glyceraldehyde 3-phosphate = dihydroxyacetone phosphate. It participates in carbohydrate biosynthesis; gluconeogenesis. It functions in the pathway carbohydrate degradation; glycolysis; D-glyceraldehyde 3-phosphate from glycerone phosphate: step 1/1. Functionally, involved in the gluconeogenesis. Catalyzes stereospecifically the conversion of dihydroxyacetone phosphate (DHAP) to D-glyceraldehyde-3-phosphate (G3P). The sequence is that of Triosephosphate isomerase from Thermoanaerobacter pseudethanolicus (strain ATCC 33223 / 39E) (Clostridium thermohydrosulfuricum).